A 142-amino-acid polypeptide reads, in one-letter code: Large ribosomal subunit protein uL13 (142 aa).

It belongs to the universal ribosomal protein uL13 family. Part of the 50S ribosomal subunit.

Its function is as follows. This protein is one of the early assembly proteins of the 50S ribosomal subunit, although it is not seen to bind rRNA by itself. It is important during the early stages of 50S assembly. In Pectobacterium carotovorum subsp. carotovorum (strain PC1), this protein is Large ribosomal subunit protein uL13.